The sequence spans 247 residues: Adenosylcobinamide-GDP ribazoletransferase (247 aa).

5 helical membrane passes run 34-54, 59-79, 113-133, 138-158, and 194-214; these read IITF…VFMV, CGAP…TGGF, GGLA…ELAL, ILAS…LLMY, and VLLP…AIFI.

It belongs to the CobS family. It depends on Mg(2+) as a cofactor.

Its subcellular location is the cell inner membrane. The enzyme catalyses alpha-ribazole + adenosylcob(III)inamide-GDP = adenosylcob(III)alamin + GMP + H(+). It carries out the reaction alpha-ribazole 5'-phosphate + adenosylcob(III)inamide-GDP = adenosylcob(III)alamin 5'-phosphate + GMP + H(+). It functions in the pathway cofactor biosynthesis; adenosylcobalamin biosynthesis; adenosylcobalamin from cob(II)yrinate a,c-diamide: step 7/7. Functionally, joins adenosylcobinamide-GDP and alpha-ribazole to generate adenosylcobalamin (Ado-cobalamin). Also synthesizes adenosylcobalamin 5'-phosphate from adenosylcobinamide-GDP and alpha-ribazole 5'-phosphate. This is Adenosylcobinamide-GDP ribazoletransferase from Escherichia coli O45:K1 (strain S88 / ExPEC).